We begin with the raw amino-acid sequence, 517 residues long: 2-isopropylmalate synthase (517 aa).

A Pyruvate carboxyltransferase domain is found at 6–267 (IIVFDTTLRD…YTTINTPEIY (262 aa)). Residues D15, H201, H203, and N237 each contribute to the Mn(2+) site. The interval 393–517 (DLIGLQISDC…RLSKSSEHQV (125 aa)) is regulatory domain.

This sequence belongs to the alpha-IPM synthase/homocitrate synthase family. LeuA type 1 subfamily. Homodimer. It depends on Mn(2+) as a cofactor.

The protein resides in the cytoplasm. The catalysed reaction is 3-methyl-2-oxobutanoate + acetyl-CoA + H2O = (2S)-2-isopropylmalate + CoA + H(+). Its pathway is amino-acid biosynthesis; L-leucine biosynthesis; L-leucine from 3-methyl-2-oxobutanoate: step 1/4. Catalyzes the condensation of the acetyl group of acetyl-CoA with 3-methyl-2-oxobutanoate (2-ketoisovalerate) to form 3-carboxy-3-hydroxy-4-methylpentanoate (2-isopropylmalate). The protein is 2-isopropylmalate synthase of Aliarcobacter butzleri (strain RM4018) (Arcobacter butzleri).